A 557-amino-acid polypeptide reads, in one-letter code: Leucine-rich glioma-inactivated protein 1 (557 aa).

A signal peptide spans 1–34; it reads MESESSRRMGNACIPLKRIAYFLCLFSVVLLTEG. The LRRNT domain maps to 35–72; sequence KKPAKPKCPAVCTCSKDNALCENARSIPRTVPPDVISL. LRR repeat units lie at residues 92 to 113, 116 to 137, and 140 to 161; these read SLQL…AFIG, HLEY…TFRG, and SLIH…IFKG. The 51-residue stretch at 173-223 folds into the LRRCT domain; it reads NAFNCDCKLKWLVEWLGHTNATVEDIYCEGPPEYKKRKINSLSPKDFDCII. Asn-192 is a glycosylation site (N-linked (GlcNAc...) asparagine). EAR repeat units follow at residues 225-267, 271-313, 317-364, 366-415, 419-462, 464-506, and 510-552; these read EFAK…EWDH, TFRN…KRDG, KFIK…KWNG, GFYS…QWSK, LFTN…KWGG, SFQD…NWDA, and KFVK…KHVI. Asn-277 carries an N-linked (GlcNAc...) asparagine glycan. Asn-422 carries N-linked (GlcNAc...) asparagine glycosylation.

As to quaternary structure, oligomer. Interacts with KCNA1 within a complex containing KCNA1, KCNA4 and KCNAB1. Part of a complex containing ADAM22, DLG4/PSD95 and CACNG2 (stargazin). Can bind to ADAM11 and ADAM23. Post-translationally, glycosylated. As to expression, expressed in the brain (at protein level). Expressed in cerebellar cortex basket cell terminals (at protein level). Highly expressed in the dentate gyrus and CA3 field of the hippocampus.

It is found in the secreted. It localises to the synapse. The protein resides in the cytoplasm. The protein localises to the golgi apparatus. Its subcellular location is the endoplasmic reticulum. Functionally, regulates voltage-gated potassium channels assembled from KCNA1, KCNA4 and KCNAB1. It slows down channel inactivation by precluding channel closure mediated by the KCNAB1 subunit. Ligand for ADAM22 that positively regulates synaptic transmission mediated by AMPA-type glutamate receptors. Plays a role in suppressing the production of MMP1/3 through the phosphatidylinositol 3-kinase/ERK pathway. This chain is Leucine-rich glioma-inactivated protein 1, found in Mus musculus (Mouse).